A 256-amino-acid chain; its full sequence is uncharacterized protein (256 aa).

Residues Ile18, Ser37, Lys46, Asp66, Tyr164, Lys168, Val197, and Thr199 each coordinate NADP(+). Tyr164 acts as the Proton donor in catalysis. Residue Lys168 is the Lowers pKa of active site Tyr of the active site.

This sequence belongs to the short-chain dehydrogenases/reductases (SDR) family.

It is found in the cytoplasm. This is an uncharacterized protein from Saccharomyces cerevisiae (strain ATCC 204508 / S288c) (Baker's yeast).